Here is a 558-residue protein sequence, read N- to C-terminus: CTP synthase (558 aa).

The interval 1–271 is amidoligase domain; sequence MAARQQTKHL…DAYVVRRLGL (271 aa). Serine 18 provides a ligand contact to CTP. Serine 18 is a UTP binding site. Residues 19–24 and aspartate 76 each bind ATP; that span reads SLGKGL. Aspartate 76 and glutamate 145 together coordinate Mg(2+). CTP is bound by residues 152–154, 192–197, and lysine 228; these read DIE and KTKPTQ. UTP is bound by residues 192-197 and lysine 228; that span reads KTKPTQ. The region spanning 296–545 is the Glutamine amidotransferase type-1 domain; it reads TIALVGKYVD…IRAALLHRCP (250 aa). Glycine 359 provides a ligand contact to L-glutamine. The active-site Nucleophile; for glutamine hydrolysis is cysteine 386. L-glutamine-binding positions include 387–390, glutamate 410, and arginine 471; that span reads LGLQ. Catalysis depends on residues histidine 518 and glutamate 520.

This sequence belongs to the CTP synthase family. Homotetramer.

The enzyme catalyses UTP + L-glutamine + ATP + H2O = CTP + L-glutamate + ADP + phosphate + 2 H(+). It catalyses the reaction L-glutamine + H2O = L-glutamate + NH4(+). It carries out the reaction UTP + NH4(+) + ATP = CTP + ADP + phosphate + 2 H(+). It functions in the pathway pyrimidine metabolism; CTP biosynthesis via de novo pathway; CTP from UDP: step 2/2. With respect to regulation, allosterically activated by GTP, when glutamine is the substrate; GTP has no effect on the reaction when ammonia is the substrate. The allosteric effector GTP functions by stabilizing the protein conformation that binds the tetrahedral intermediate(s) formed during glutamine hydrolysis. Inhibited by the product CTP, via allosteric rather than competitive inhibition. In terms of biological role, catalyzes the ATP-dependent amination of UTP to CTP with either L-glutamine or ammonia as the source of nitrogen. Regulates intracellular CTP levels through interactions with the four ribonucleotide triphosphates. The polypeptide is CTP synthase (Acidothermus cellulolyticus (strain ATCC 43068 / DSM 8971 / 11B)).